The sequence spans 289 residues: uncharacterized protein (289 aa).

Positions 1–19 (MAKWLGAPLARGVSTATRA) are cleaved as a signal peptide. 2 helical membrane-spanning segments follow: residues 90–110 (GLLA…GWGV) and 257–277 (AALS…LVFA).

The protein resides in the cell membrane. This is an uncharacterized protein from Mycobacterium tuberculosis (strain ATCC 25618 / H37Rv).